Consider the following 244-residue polypeptide: 1-(5-phosphoribosyl)-5-[(5-phosphoribosylamino)methylideneamino] imidazole-4-carboxamide isomerase (244 aa).

Aspartate 8 acts as the Proton acceptor in catalysis. Aspartate 130 acts as the Proton donor in catalysis.

It belongs to the HisA/HisF family.

The protein resides in the cytoplasm. The enzyme catalyses 1-(5-phospho-beta-D-ribosyl)-5-[(5-phospho-beta-D-ribosylamino)methylideneamino]imidazole-4-carboxamide = 5-[(5-phospho-1-deoxy-D-ribulos-1-ylimino)methylamino]-1-(5-phospho-beta-D-ribosyl)imidazole-4-carboxamide. Its pathway is amino-acid biosynthesis; L-histidine biosynthesis; L-histidine from 5-phospho-alpha-D-ribose 1-diphosphate: step 4/9. In Hahella chejuensis (strain KCTC 2396), this protein is 1-(5-phosphoribosyl)-5-[(5-phosphoribosylamino)methylideneamino] imidazole-4-carboxamide isomerase.